The sequence spans 464 residues: ATP synthase subunit beta (464 aa).

153 to 160 (GGAGVGKT) lines the ATP pocket.

The protein belongs to the ATPase alpha/beta chains family. F-type ATPases have 2 components, CF(1) - the catalytic core - and CF(0) - the membrane proton channel. CF(1) has five subunits: alpha(3), beta(3), gamma(1), delta(1), epsilon(1). CF(0) has three main subunits: a(1), b(2) and c(9-12). The alpha and beta chains form an alternating ring which encloses part of the gamma chain. CF(1) is attached to CF(0) by a central stalk formed by the gamma and epsilon chains, while a peripheral stalk is formed by the delta and b chains.

It is found in the cell membrane. The enzyme catalyses ATP + H2O + 4 H(+)(in) = ADP + phosphate + 5 H(+)(out). Functionally, produces ATP from ADP in the presence of a proton gradient across the membrane. The catalytic sites are hosted primarily by the beta subunits. This Alkaliphilus oremlandii (strain OhILAs) (Clostridium oremlandii (strain OhILAs)) protein is ATP synthase subunit beta.